Consider the following 372-residue polypeptide: Solute carrier family 35 member F6 (372 aa).

The first 18 residues, 1–18 (MAWTKYQLFLAGLMLVTG), serve as a signal peptide directing secretion. 2 consecutive transmembrane segments (helical) span residues 48–68 (FVQA…FYLL) and 89–109 (LLFL…YVAL). Positions 105 to 160 (MYVALNMTSASSFQMLRGAVIIFTGLFSVAFLDRRLAPSQWLGILITIAGLVVVGL) constitute an EamA domain. Asn110 carries N-linked (GlcNAc...) asparagine glycosylation. The next 7 helical transmembrane spans lie at 116–136 (SFQM…VAFL), 145–165 (WLGI…DLLS), 176–196 (VITG…QMVL), 211–231 (AVGI…VPMF), 261–281 (LIAL…FSGI), 293–312 (MVLD…ALGW), and 320–336 (ILGF…YNGL). Position 366 is a phosphothreonine (Thr366).

The protein belongs to the SLC35F solute transporter family. As to quaternary structure, interacts with SLC25A5.

It is found in the mitochondrion. The protein resides in the lysosome membrane. Functionally, involved in the maintenance of mitochondrial membrane potential in pancreatic ductal adenocarcinoma (PDAC) cells. Promotes pancreatic ductal adenocarcinoma (PDAC) cell growth. May play a role as a nucleotide-sugar transporter. The chain is Solute carrier family 35 member F6 (Slc35f6) from Mus musculus (Mouse).